Consider the following 142-residue polypeptide: Large ribosomal subunit protein uL11 (142 aa).

It belongs to the universal ribosomal protein uL11 family. Part of the ribosomal stalk of the 50S ribosomal subunit. Interacts with L10 and the large rRNA to form the base of the stalk. L10 forms an elongated spine to which L12 dimers bind in a sequential fashion forming a multimeric L10(L12)X complex. Post-translationally, one or more lysine residues are methylated.

Its function is as follows. Forms part of the ribosomal stalk which helps the ribosome interact with GTP-bound translation factors. This is Large ribosomal subunit protein uL11 from Shewanella halifaxensis (strain HAW-EB4).